The following is a 288-amino-acid chain: Ribosomal RNA small subunit methyltransferase A (288 aa).

Positions 28, 30, 55, 76, 101, and 130 each coordinate S-adenosyl-L-methionine.

It belongs to the class I-like SAM-binding methyltransferase superfamily. rRNA adenine N(6)-methyltransferase family. RsmA subfamily.

It is found in the cytoplasm. It carries out the reaction adenosine(1518)/adenosine(1519) in 16S rRNA + 4 S-adenosyl-L-methionine = N(6)-dimethyladenosine(1518)/N(6)-dimethyladenosine(1519) in 16S rRNA + 4 S-adenosyl-L-homocysteine + 4 H(+). Specifically dimethylates two adjacent adenosines (A1518 and A1519) in the loop of a conserved hairpin near the 3'-end of 16S rRNA in the 30S particle. May play a critical role in biogenesis of 30S subunits. This Moorella thermoacetica (strain ATCC 39073 / JCM 9320) protein is Ribosomal RNA small subunit methyltransferase A.